Consider the following 124-residue polypeptide: MATINQLVRKPRSMKVAKSNVPALEACPQKRGVCTRVYTTTPKKPNSALRKVCRVRLTNGYEVSSYIGGEGHNLQEHSVILIRGGRVKDLPGVRYHTVRGALDCSGVKDRKQGRSKYGVKKPKA.

This sequence belongs to the universal ribosomal protein uS12 family. As to quaternary structure, part of the 30S ribosomal subunit. Contacts proteins S8 and S17. May interact with IF1 in the 30S initiation complex.

With S4 and S5 plays an important role in translational accuracy. In terms of biological role, interacts with and stabilizes bases of the 16S rRNA that are involved in tRNA selection in the A site and with the mRNA backbone. Located at the interface of the 30S and 50S subunits, it traverses the body of the 30S subunit contacting proteins on the other side and probably holding the rRNA structure together. The combined cluster of proteins S8, S12 and S17 appears to hold together the shoulder and platform of the 30S subunit. The sequence is that of Small ribosomal subunit protein uS12 from Photorhabdus laumondii subsp. laumondii (strain DSM 15139 / CIP 105565 / TT01) (Photorhabdus luminescens subsp. laumondii).